The primary structure comprises 311 residues: Glycosyltransferase 6 domain-containing protein 1 (311 aa).

Over 1–5 the chain is Cytoplasmic; the sequence is MKAKG. Residues 6-26 form a helical; Signal-anchor for type II membrane protein membrane-spanning segment; it reads RILLLTSCLFLLLLLLAKIHL. Residues 27 to 311 are Lumenal-facing; the sequence is RNHQEEELPL…KVAHYPTDDL (285 aa). A glycan (N-linked (GlcNAc...) asparagine) is linked at Asn-77. Substrate-binding positions include 85–90, 176–178, and 198–201; these read FAVSSF, SVN, and HAWW. Residue Glu-266 is the Nucleophile of the active site.

Belongs to the glycosyltransferase 6 family. Mn(2+) is required as a cofactor.

It is found in the membrane. The sequence is that of Glycosyltransferase 6 domain-containing protein 1 (Glt6d1) from Rattus norvegicus (Rat).